The chain runs to 452 residues: Membrane-bound lytic murein transglycosylase D (452 aa).

Positions methionine 1–glycine 15 are cleaved as a signal peptide. Cysteine 16 carries the N-palmitoyl cysteine lipid modification. A lipid anchor (S-diacylglycerol cysteine) is attached at cysteine 16. Residues asparagine 113–glycine 198 form a slt-type domain region. Glutamate 125 is an active-site residue. 2 LysM domains span residues arginine 341 to isoleucine 384 and isoleucine 400 to asparagine 448.

It belongs to the transglycosylase Slt family.

The protein localises to the cell membrane. It carries out the reaction Exolytic cleavage of the (1-&gt;4)-beta-glycosidic linkage between N-acetylmuramic acid (MurNAc) and N-acetylglucosamine (GlcNAc) residues in peptidoglycan, from either the reducing or the non-reducing ends of the peptidoglycan chains, with concomitant formation of a 1,6-anhydrobond in the MurNAc residue.. Its function is as follows. Murein-degrading enzyme. May play a role in recycling of muropeptides during cell elongation and/or cell division. The polypeptide is Membrane-bound lytic murein transglycosylase D (mltD) (Escherichia coli O6:H1 (strain CFT073 / ATCC 700928 / UPEC)).